The primary structure comprises 482 residues: Cysteine--tRNA ligase (482 aa).

Cys-28 provides a ligand contact to Zn(2+). Positions 30-40 (PTVYNFLHVGN) match the 'HIGH' region motif. Cys-208, His-233, and Glu-237 together coordinate Zn(2+). Positions 265–269 (KMSKS) match the 'KMSKS' region motif. Lys-268 serves as a coordination point for ATP.

The protein belongs to the class-I aminoacyl-tRNA synthetase family. As to quaternary structure, monomer. Requires Zn(2+) as cofactor.

The protein resides in the cytoplasm. The enzyme catalyses tRNA(Cys) + L-cysteine + ATP = L-cysteinyl-tRNA(Cys) + AMP + diphosphate. The protein is Cysteine--tRNA ligase of Bdellovibrio bacteriovorus (strain ATCC 15356 / DSM 50701 / NCIMB 9529 / HD100).